A 240-amino-acid polypeptide reads, in one-letter code: Lipoprotein-releasing system ATP-binding protein LolD (240 aa).

One can recognise an ABC transporter domain in the interval 15–240 (IRAERLGKTY…GLRELTSAEV (226 aa)). An ATP-binding site is contributed by 51 to 58 (GASGAGKS).

Belongs to the ABC transporter superfamily. Lipoprotein translocase (TC 3.A.1.125) family. The complex is composed of two ATP-binding proteins (LolD) and two transmembrane proteins (LolC and LolE).

The protein localises to the cell inner membrane. Its function is as follows. Part of the ABC transporter complex LolCDE involved in the translocation of mature outer membrane-directed lipoproteins, from the inner membrane to the periplasmic chaperone, LolA. Responsible for the formation of the LolA-lipoprotein complex in an ATP-dependent manner. The protein is Lipoprotein-releasing system ATP-binding protein LolD of Xylella fastidiosa (strain 9a5c).